The chain runs to 316 residues: Acetyl-coenzyme A carboxylase carboxyl transferase subunit alpha (316 aa).

In terms of domain architecture, CoA carboxyltransferase C-terminal spans 39-293 (RLQDKSKALT…RGELLTQLKM (255 aa)).

It belongs to the AccA family. In terms of assembly, acetyl-CoA carboxylase is a heterohexamer composed of biotin carboxyl carrier protein (AccB), biotin carboxylase (AccC) and two subunits each of ACCase subunit alpha (AccA) and ACCase subunit beta (AccD).

It localises to the cytoplasm. It carries out the reaction N(6)-carboxybiotinyl-L-lysyl-[protein] + acetyl-CoA = N(6)-biotinyl-L-lysyl-[protein] + malonyl-CoA. It participates in lipid metabolism; malonyl-CoA biosynthesis; malonyl-CoA from acetyl-CoA: step 1/1. Its function is as follows. Component of the acetyl coenzyme A carboxylase (ACC) complex. First, biotin carboxylase catalyzes the carboxylation of biotin on its carrier protein (BCCP) and then the CO(2) group is transferred by the carboxyltransferase to acetyl-CoA to form malonyl-CoA. This Pseudomonas aeruginosa (strain LESB58) protein is Acetyl-coenzyme A carboxylase carboxyl transferase subunit alpha.